The following is a 493-amino-acid chain: MDSNCIQFLHDKTILVTGVPGFLAKVFVEKILRIQPKVKKLFLLLRAADNESAMQRFHSEVLEKDLFRVLKNALGDENLKAFITEKVVPIPGDISVDNLGVKGSDLLQHMWNEIDIIVNVAATTNFDERYDVGLSVNTFGPLNVLNFAKKCVKGQLLLHVSTAYVRGEKSGLLHEKTFHMGETLNGHRKLVIETEMELMKQKLKELQKQNCSEEEISQSMKDLGMSRAKLHGWPNTYVFTKSMGEMLLGNYRENLPIVIIRPTMITSTFSEPFPGWIEGLRTIDSVIVAYGKGRLKCFLADPNSVLDLIPVDMVANAMVTAAAIHAGKLGSQTVYHVGSSCKNPITFEQIHDLAASYFTKNPLVRRDGSSILVSKGTILSTMAQFSFYMTLRYKLPLQMLRLIYVIYPWWNGNKYKDIDRKIKLAMRLVDLYRPYVLFKGIFDDTNTEKLRLKRKEINKEMYGLFEFDPKSIDWEDYMTTIHIPGLITYVLKK.

Belongs to the fatty acyl-CoA reductase family. As to expression, expressed in the endodermal cell layer surrounding the central vasculature in roots. Expressed in the hilum region of seeds. Expressed in stamen filaments and receptacle of siliques.

It carries out the reaction a long-chain fatty acyl-CoA + 2 NADPH + 2 H(+) = a long-chain primary fatty alcohol + 2 NADP(+) + CoA. Catalyzes the reduction of fatty acyl-CoA to fatty alcohols. Catalyzes specifically the formation of C18:0 and C20:0 fatty alcohols. Provides the fatty alcohols required for synthesis of suberin in roots, seed coat and wound-induced leaf tissue. Provides the fatty alcohols required for synthesis of alkyl hydroxycinnamates in root waxes. In Arabidopsis thaliana (Mouse-ear cress), this protein is Probable fatty acyl-CoA reductase 4.